A 571-amino-acid chain; its full sequence is Urease subunit alpha (571 aa).

Residues G133–F571 form the Urease domain. Ni(2+) contacts are provided by H138, H140, and K221. At K221 the chain carries N6-carboxylysine. H223 is a substrate binding site. Ni(2+) contacts are provided by H250 and H276. Residue H324 is the Proton donor of the active site. Position 364 (D364) interacts with Ni(2+).

This sequence belongs to the metallo-dependent hydrolases superfamily. Urease alpha subunit family. As to quaternary structure, heterotrimer of UreA (gamma), UreB (beta) and UreC (alpha) subunits. Three heterotrimers associate to form the active enzyme. The cofactor is Ni cation. Carboxylation allows a single lysine to coordinate two nickel ions.

It localises to the cytoplasm. The enzyme catalyses urea + 2 H2O + H(+) = hydrogencarbonate + 2 NH4(+). Its pathway is nitrogen metabolism; urea degradation; CO(2) and NH(3) from urea (urease route): step 1/1. The protein is Urease subunit alpha of Corynebacterium efficiens (strain DSM 44549 / YS-314 / AJ 12310 / JCM 11189 / NBRC 100395).